Here is a 345-residue protein sequence, read N- to C-terminus: Myb/SANT-like DNA-binding domain-containing protein 4 (345 aa).

The Myb-like domain occupies 4–77; the sequence is LKRKRKSNFS…EVKRRYLDWR (74 aa). A Glycyl lysine isopeptide (Lys-Gly) (interchain with G-Cter in SUMO2) cross-link involves residue K9. At S106 the chain carries Phosphoserine. Residues K114 and K142 each participate in a glycyl lysine isopeptide (Lys-Gly) (interchain with G-Cter in SUMO2) cross-link. The segment at 141–160 is disordered; that stretch reads VKVEEEERDPQSPEFEIEEE. A Phosphothreonine modification is found at T188. Residues 203–345 are a coiled coil; it reads LLVNIEKQKL…LRIQKEGHLQ (143 aa). Glycyl lysine isopeptide (Lys-Gly) (interchain with G-Cter in SUMO2) cross-links involve residues K237, K254, and K273.

The polypeptide is Myb/SANT-like DNA-binding domain-containing protein 4 (MSANTD4) (Bos taurus (Bovine)).